A 594-amino-acid polypeptide reads, in one-letter code: Solute carrier family 13 member 1 (594 aa).

A run of 5 helical transmembrane segments spans residues 13–33 (FLLV…IRTK), 40–60 (ILFV…ITAL), 77–97 (VASA…CLAT), 113–133 (VMMV…STAF), and 134–154 (LSMW…VEAV). Asn174 carries an N-linked (GlcNAc...) asparagine glycan. A compositionally biased stretch (basic and acidic residues) spans 192–220 (TNEKKEKTKPAPGSSHDKGKVSRKMETEK). Residues 192–226 (TNEKKEKTKPAPGSSHDKGKVSRKMETEKNAVTGA) form a disordered region. 8 consecutive transmembrane segments (helical) span residues 239-259 (LMCL…ITGT), 283-303 (SWFL…WIWL), 347-367 (IVTL…DPGF), 380-400 (GYVT…LIPA), 461-481 (LSPL…LIVT), 487-507 (ASNP…AEAI), 511-531 (PLQI…LPVA), and 552-572 (AGLG…FTWI). N-linked (GlcNAc...) asparagine glycosylation occurs at Asn590.

This sequence belongs to the SLC13A/DASS transporter (TC 2.A.47) family. NADC subfamily. In terms of tissue distribution, highly expressed in kidney and ileum, detected at lower levels in duodenum/jejunum and colon, and at very low levels in cecum, testis, adrenal and adipose tissues. Expressed in the kidney.

It localises to the apical cell membrane. It carries out the reaction sulfate(out) + 3 Na(+)(out) = sulfate(in) + 3 Na(+)(in). The catalysed reaction is selenate(out) + 3 Na(+)(out) = selenate(in) + 3 Na(+)(in). The enzyme catalyses thiosulfate(out) + 3 Na(+)(out) = thiosulfate(in) + 3 Na(+)(in). Its function is as follows. Sodium:sulfate symporter that mediates sulfate reabsorption in the kidney and small intestine. Can also mediate the transport of selenate and thiosulfate. This Mus musculus (Mouse) protein is Solute carrier family 13 member 1 (Slc13a1).